A 114-amino-acid polypeptide reads, in one-letter code: Large ribosomal subunit protein bL20 (114 aa).

This sequence belongs to the bacterial ribosomal protein bL20 family.

Binds directly to 23S ribosomal RNA and is necessary for the in vitro assembly process of the 50S ribosomal subunit. It is not involved in the protein synthesizing functions of that subunit. In Parabacteroides distasonis (strain ATCC 8503 / DSM 20701 / CIP 104284 / JCM 5825 / NCTC 11152), this protein is Large ribosomal subunit protein bL20.